We begin with the raw amino-acid sequence, 269 residues long: Phosphonoacetaldehyde hydrolase (269 aa).

The active-site Nucleophile is Asp9. The Mg(2+) site is built by Asp9 and Ala11. The Schiff-base intermediate with substrate role is filled by Lys50. Mg(2+) is bound at residue Asp184.

The protein belongs to the HAD-like hydrolase superfamily. PhnX family. As to quaternary structure, homodimer. Mg(2+) serves as cofactor.

The catalysed reaction is phosphonoacetaldehyde + H2O = acetaldehyde + phosphate + H(+). Involved in phosphonate degradation. This chain is Phosphonoacetaldehyde hydrolase, found in Lysinibacillus sphaericus (strain C3-41).